A 955-amino-acid chain; its full sequence is Glycine dehydrogenase (decarboxylating) (955 aa).

Lysine 702 bears the N6-(pyridoxal phosphate)lysine mark.

This sequence belongs to the GcvP family. The glycine cleavage system is composed of four proteins: P, T, L and H. Pyridoxal 5'-phosphate is required as a cofactor.

It carries out the reaction N(6)-[(R)-lipoyl]-L-lysyl-[glycine-cleavage complex H protein] + glycine + H(+) = N(6)-[(R)-S(8)-aminomethyldihydrolipoyl]-L-lysyl-[glycine-cleavage complex H protein] + CO2. Its function is as follows. The glycine cleavage system catalyzes the degradation of glycine. The P protein binds the alpha-amino group of glycine through its pyridoxal phosphate cofactor; CO(2) is released and the remaining methylamine moiety is then transferred to the lipoamide cofactor of the H protein. This chain is Glycine dehydrogenase (decarboxylating), found in Bradyrhizobium diazoefficiens (strain JCM 10833 / BCRC 13528 / IAM 13628 / NBRC 14792 / USDA 110).